Reading from the N-terminus, the 424-residue chain is L-threonine:uridine-5'-aldehyde transaldolase (424 aa).

N6-(pyridoxal phosphate)lysine is present on Lys-235.

The protein belongs to the SHMT family. Pyridoxal 5'-phosphate serves as cofactor.

It catalyses the reaction uridine-5'-aldehyde + L-threonine = (5'S,6'S)-C-glycyluridine + acetaldehyde. It participates in antibiotic biosynthesis. Functionally, transaldolase involved in the biosynthesis of the lipopeptidyl nucleoside antibiotic A-90289. Catalyzes the condensation of L-threonine and uridine-5'-aldehyde to form 5'-C-glycyluridine (GlyU). Forms (5'S,6'S)-GlyU. Has no activity with alternative amino acids, such as glycine or serine. The protein is L-threonine:uridine-5'-aldehyde transaldolase of Streptomyces sp.